Consider the following 242-residue polypeptide: Haloacid dehalogenase-like hydrolase domain-containing protein 3 (242 aa).

It belongs to the HAD-like hydrolase superfamily.

The sequence is that of Haloacid dehalogenase-like hydrolase domain-containing protein 3 (hdhd3) from Danio rerio (Zebrafish).